We begin with the raw amino-acid sequence, 103 residues long: NADH-quinone oxidoreductase subunit K (103 aa).

3 helical membrane passes run 5 to 25, 32 to 52, and 66 to 86; these read VPTSYYLALSGVLFALGLIGV, ILIFLSVELMLNAANIALVAF, and FIVMTLAAAEVAIGLAIIVAI.

Belongs to the complex I subunit 4L family. NDH-1 is composed of 15 different subunits. Subunits NuoA, H, J, K, L, M, N constitute the membrane sector of the complex.

Its subcellular location is the cell membrane. It catalyses the reaction a quinone + NADH + 5 H(+)(in) = a quinol + NAD(+) + 4 H(+)(out). Functionally, NDH-1 shuttles electrons from NADH, via FMN and iron-sulfur (Fe-S) centers, to quinones in the respiratory chain. The immediate electron acceptor for the enzyme in this species is believed to be a menaquinone. Couples the redox reaction to proton translocation (for every two electrons transferred, four hydrogen ions are translocated across the cytoplasmic membrane), and thus conserves the redox energy in a proton gradient. The chain is NADH-quinone oxidoreductase subunit K from Deinococcus radiodurans (strain ATCC 13939 / DSM 20539 / JCM 16871 / CCUG 27074 / LMG 4051 / NBRC 15346 / NCIMB 9279 / VKM B-1422 / R1).